The primary structure comprises 497 residues: Serine/threonine-protein phosphatase 2A 56 kDa regulatory subunit beta isoform (497 aa).

The segment covering 1–19 (METKLPPASTPTSPSSPGL) has biased composition (low complexity). Disordered regions lie at residues 1-55 (METK…YQSN) and 473-497 (QGTQ…GGQS). Ser32, Ser35, Ser44, Ser46, Ser47, and Ser48 each carry phosphoserine. Positions 34–45 (RSLRRARPRRSH) are enriched in basic residues.

This sequence belongs to the phosphatase 2A regulatory subunit B56 family. Component of the serine/threonine-protein phosphatase 2A complex (PP2A). This complex consists of a common heterodimeric core enzyme, composed of a 36 kDa catalytic subunit (subunit C) and a 65 kDa constant scaffold subunit (PR65 or subunit A), that associates with a variety of regulatory subunits. Proteins that associate with the core dimer include three families of regulatory subunits B (the R2/B/PR55/B55, R3/B''/PR72/PR130/PR59 and R5/B'/B56 families), the 48 kDa variable regulatory subunit, viral proteins, and cell signaling molecules. Interacts with SGO1. Interacts with AKT1. Ubiquitinated by CUL3-KLHL15 complex; this modification leads to proteasomal degradation. As to expression, widely expressed at the mRNA level, with highest levels in cerebellum and lung.

The protein localises to the cytoplasm. Its function is as follows. As the regulatory component of the serine/threonine-protein phosphatase 2A (PP2A) holoenzyme, modulates substrate specificity, subcellular localization, and responsiveness to phosphorylation. The phosphorylated form mediates the interaction between PP2A and AKT1, leading to AKT1 dephosphorylation. The sequence is that of Serine/threonine-protein phosphatase 2A 56 kDa regulatory subunit beta isoform (Ppp2r5b) from Rattus norvegicus (Rat).